We begin with the raw amino-acid sequence, 576 residues long: Alkaline phosphatase PhoD (576 aa).

The signal sequence occupies residues 1–32 (MNSLLHHSFLKTVFSSLAIAIVTSSLSSVTIA). Positions 68 and 107 each coordinate Zn(2+). T107 functions as the Phosphothreonine intermediate in the catalytic mechanism. Residues C108 and C144 are joined by a disulfide bond. Substrate is bound by residues N128 and 188–190 (KDR). A disulfide bridge links C248 with C332. 5 residues coordinate Zn(2+): D318, H322, D363, H364, and H508. A disulfide bond links C562 and C573.

In terms of assembly, monomer. The cofactor is Zn(2+).

The enzyme catalyses a phosphate monoester + H2O = an alcohol + phosphate. Its function is as follows. Alkaline phosphatase with broad substrate specificity. Has phosphatase activity towards nucleotide and sugar phosphates with a preference to nucleotide phosphates. Has no phosphodiesterase activity. The chain is Alkaline phosphatase PhoD from Zymomonas mobilis subsp. mobilis (strain ATCC 31821 / ZM4 / CP4).